The sequence spans 372 residues: 7-methylxanthosine synthase 1 (372 aa).

Position 18 (Y18) interacts with S-adenosyl-L-homocysteine. N21 and N25 together coordinate xanthosine. S-adenosyl-L-homocysteine is bound by residues C62, N67, D101, L102, S140, F141, and C157. Xanthosine is bound at residue Y158. C159 lines the S-adenosyl-L-homocysteine pocket. Xanthosine is bound by residues Q161 and W162. Mg(2+)-binding residues include N179, D261, F263, and N264. 3 residues coordinate xanthosine: S316, Y321, and Y356.

This sequence belongs to the methyltransferase superfamily. Type-7 methyltransferase family. Requires Mg(2+) as cofactor. Expressed in stems, young leaves, floral buds, developing endosperm and immature fruits (grains). Detected in roots and old leaves, but not in mature fruits.

The enzyme catalyses xanthosine + S-adenosyl-L-methionine = 7-methylxanthosine + S-adenosyl-L-homocysteine. The protein operates within alkaloid biosynthesis. In terms of biological role, involved in the biosynthesis of caffeine. Specific for xanthosine and could not use xanthosine 5'-monophosphate (XMP) as substrate. Catalyzes the 7-N-methylation activity of xanthosine, but does not have 1-N- or 3-N-methylation activity. This Coffea arabica (Arabian coffee) protein is 7-methylxanthosine synthase 1.